Consider the following 257-residue polypeptide: MLIVVSPAKTLDYESPVSTSNFTQPELTAHSAELIQVCRTLSSQDVSELMSVSDKIAGLNVARFAQWSETFTLDNARQAIFAFKGDVYTGLEAETLSPQDLDFAQQHLRMLSGLYGVLRPLDLMQPYRLEMGTKLANARGANLYQFWGDIITEKLNQAIEAQGDNVLVNLASNEYFKAVNPKRLNAQIVTPIFKDAKNGQYKIISFFAKKARGMMARYIIENRIKSVKDLEGFNTAGYYFVASESTPTELVFKREEQ.

Belongs to the UPF0246 family.

This chain is UPF0246 protein VCM66_2278, found in Vibrio cholerae serotype O1 (strain M66-2).